The sequence spans 91 residues: UPF0335 protein BRADO1188 (91 aa).

The protein belongs to the UPF0335 family.

The protein is UPF0335 protein BRADO1188 of Bradyrhizobium sp. (strain ORS 278).